Reading from the N-terminus, the 134-residue chain is MSSDTIADIITSIRNADMYRKSVVRVASTNISQSIVKILLREGFIENVRKHRENNKDFLVLTLRHRRNRKRPYRNLLNLKRISRPGLRIYSNYQRIPRILGGMGVVILSTSRGIMTDREARLERIGGEILCYIW.

Belongs to the universal ribosomal protein uS8 family. In terms of assembly, part of the 30S ribosomal subunit.

It localises to the plastid. The protein resides in the chloroplast. Its function is as follows. One of the primary rRNA binding proteins, it binds directly to 16S rRNA central domain where it helps coordinate assembly of the platform of the 30S subunit. This chain is Small ribosomal subunit protein uS8c (rps8), found in Helianthus annuus (Common sunflower).